The sequence spans 405 residues: Cytochrome P450 109 (405 aa).

Cys-351 contributes to the heme binding site.

It belongs to the cytochrome P450 family. Heme is required as a cofactor.

Functionally, cytochromes P450 are a group of heme-thiolate monooxygenases. They oxidize a variety of structurally unrelated compounds, including steroids, fatty acids, and xenobiotics. The polypeptide is Cytochrome P450 109 (cyp109) (Bacillus spizizenii (strain ATCC 23059 / NRRL B-14472 / W23) (Bacillus subtilis subsp. spizizenii)).